The following is a 457-amino-acid chain: Siroheme synthase (457 aa).

The interval 1–204 is precorrin-2 dehydrogenase /sirohydrochlorin ferrochelatase; the sequence is MDHLPIFCQL…NDQKAITETT (204 aa). NAD(+) is bound by residues 22–23 and 43–44; these read DV and LA. S128 carries the post-translational modification Phosphoserine. The interval 216-457 is uroporphyrinogen-III C-methyltransferase; the sequence is GEVVLVGAGP…RDKLNWFSNH (242 aa). Position 225 (P225) interacts with S-adenosyl-L-methionine. The Proton acceptor role is filled by D248. The active-site Proton donor is K270. S-adenosyl-L-methionine-binding positions include 301 to 303, I306, 331 to 332, M382, and G411; these read GGD and TA.

This sequence in the N-terminal section; belongs to the precorrin-2 dehydrogenase / sirohydrochlorin ferrochelatase family. The protein in the C-terminal section; belongs to the precorrin methyltransferase family.

The enzyme catalyses uroporphyrinogen III + 2 S-adenosyl-L-methionine = precorrin-2 + 2 S-adenosyl-L-homocysteine + H(+). It catalyses the reaction precorrin-2 + NAD(+) = sirohydrochlorin + NADH + 2 H(+). It carries out the reaction siroheme + 2 H(+) = sirohydrochlorin + Fe(2+). It functions in the pathway cofactor biosynthesis; adenosylcobalamin biosynthesis; precorrin-2 from uroporphyrinogen III: step 1/1. Its pathway is cofactor biosynthesis; adenosylcobalamin biosynthesis; sirohydrochlorin from precorrin-2: step 1/1. It participates in porphyrin-containing compound metabolism; siroheme biosynthesis; precorrin-2 from uroporphyrinogen III: step 1/1. The protein operates within porphyrin-containing compound metabolism; siroheme biosynthesis; siroheme from sirohydrochlorin: step 1/1. It functions in the pathway porphyrin-containing compound metabolism; siroheme biosynthesis; sirohydrochlorin from precorrin-2: step 1/1. Functionally, multifunctional enzyme that catalyzes the SAM-dependent methylations of uroporphyrinogen III at position C-2 and C-7 to form precorrin-2 via precorrin-1. Then it catalyzes the NAD-dependent ring dehydrogenation of precorrin-2 to yield sirohydrochlorin. Finally, it catalyzes the ferrochelation of sirohydrochlorin to yield siroheme. In Escherichia fergusonii (strain ATCC 35469 / DSM 13698 / CCUG 18766 / IAM 14443 / JCM 21226 / LMG 7866 / NBRC 102419 / NCTC 12128 / CDC 0568-73), this protein is Siroheme synthase.